We begin with the raw amino-acid sequence, 259 residues long: ATP synthase subunit b 2 (259 aa).

Residues 5–27 form a helical membrane-spanning segment; that stretch reads WFTVSAQAINFLILVALLKRFLY.

This sequence belongs to the ATPase B chain family. In terms of assembly, F-type ATPases have 2 components, F(1) - the catalytic core - and F(0) - the membrane proton channel. F(1) has five subunits: alpha(3), beta(3), gamma(1), delta(1), epsilon(1). F(0) has three main subunits: a(1), b(2) and c(10-14). The alpha and beta chains form an alternating ring which encloses part of the gamma chain. F(1) is attached to F(0) by a central stalk formed by the gamma and epsilon chains, while a peripheral stalk is formed by the delta and b chains.

The protein localises to the cell inner membrane. Its function is as follows. F(1)F(0) ATP synthase produces ATP from ADP in the presence of a proton or sodium gradient. F-type ATPases consist of two structural domains, F(1) containing the extramembraneous catalytic core and F(0) containing the membrane proton channel, linked together by a central stalk and a peripheral stalk. During catalysis, ATP synthesis in the catalytic domain of F(1) is coupled via a rotary mechanism of the central stalk subunits to proton translocation. Component of the F(0) channel, it forms part of the peripheral stalk, linking F(1) to F(0). The sequence is that of ATP synthase subunit b 2 from Syntrophotalea carbinolica (strain DSM 2380 / NBRC 103641 / GraBd1) (Pelobacter carbinolicus).